Consider the following 425-residue polypeptide: MAVLIFLGCLLGGIAIGLPIAWALLLCGAALMFWLDMFDVQIMAQTLVNGADSFSLLAIPFFVLAGEIMNAGGLSKRIVDLPMKLVGHKPGGLGYVGVLAAMIMASLSGSAVADTAAVAALLVPMMRSANYPVNRAAGLIASGGIIAPIIPPSIPFIIFGVSSGLSISKLFMAGIAPGMMMGATLMLTWWWQASRLNLPRQQKATMQEIWHSFVSGIWALFLPVIIIGGFRSGLFTPTEAGAVAAFYALFVATVIYREMTFATLWHVLIGAAKTTSVVMFLVASAQVSAWLITIAELPMMVSDLLQPLVDSPRLLFIVIMVAILIVGMVMDLTPTVLILTPVLMPLVKEAGIDPIYFGVMFIINCSIGLITPPIGNVLNVISGVAKLKFDDAVRGVFPYVLVLYSLLVVFVFIPDLIILPLKWIN.

11 helical membrane passes run 3–23 (VLIF…IAWA), 54–74 (FSLL…AGGL), 93–113 (LGYV…SAVA), 139–159 (LIAS…FIIF), 170–190 (LFMA…LTWW), 209–229 (IWHS…IIGG), 235–255 (FTPT…ATVI), 277–297 (VVMF…IAEL), 314–334 (LLFI…DLTP), 355–375 (IYFG…PPIG), and 399–419 (YVLV…LIIL).

Belongs to the TRAP transporter large permease family. In terms of assembly, the complex comprises the extracytoplasmic solute receptor protein YiaO, and the two transmembrane proteins YiaM and YiaN.

The protein localises to the cell inner membrane. In terms of biological role, part of the tripartite ATP-independent periplasmic (TRAP) transport system YiaMNO involved in the uptake of 2,3-diketo-L-gulonate. The polypeptide is 2,3-diketo-L-gulonate TRAP transporter large permease protein YiaN (yiaN) (Escherichia coli (strain K12)).